A 237-amino-acid chain; its full sequence is GrpE protein homolog, mitochondrial (237 aa).

This sequence belongs to the GrpE family. In terms of assembly, probable component of the PAM complex at least composed of a mitochondrial HSP70 protein, GrpE, tim-44, tim-16 and tim-14/dnj-21.

The protein resides in the mitochondrion matrix. Essential component of the PAM complex, a complex required for the translocation of transit peptide-containing proteins from the inner membrane into the mitochondrial matrix in an ATP-dependent manner. Seems to control the nucleotide-dependent binding of mitochondrial HSP70 to substrate proteins. This Caenorhabditis elegans protein is GrpE protein homolog, mitochondrial.